Here is a 485-residue protein sequence, read N- to C-terminus: MLLLELKKTNQTLETIHFIGIGGVGMSGIAEILHNLGYKVQGSDLVENYNTKRLESYGIKIFLGHAEQNITNVSYVVISSAINPKNPEIKEALERKIPIIRRADMLAELMRLKCSVAVSGSHGKTTTTSLVACLFEAAGLCPTVINGGIINNKSTNAYLGSSNYLIAEADESDATFIHIPSTIAIITNIDPEHLDYYKDFETLIGAFRSFITNLPFYGFAVCCTDHKIVRKLVDDITERKIVTYGIDSEDAHIIAFNINTDIASSTFDVKISLPNVLGTTIIEKITIPTPGRHNILNSLAAIAVGIELDFGIKAIKNGFNNFKGVKRRFTKVAEYNKASIIDDYAHHPEEIKATLATAKNIANKQNGKVIAIFQPHRYSRMQYLFDDFMLCFADADILYITDIYAAGENPIEGITGQSLVDKITKHKHHDKANFLAELDDAVGVIIDNAASGDMIIMMGAGNISSFANELDRRLLSRGFSCHTVV.

Glycine 120–threonine 126 provides a ligand contact to ATP.

This sequence belongs to the MurCDEF family.

It is found in the cytoplasm. The catalysed reaction is UDP-N-acetyl-alpha-D-muramate + L-alanine + ATP = UDP-N-acetyl-alpha-D-muramoyl-L-alanine + ADP + phosphate + H(+). It participates in cell wall biogenesis; peptidoglycan biosynthesis. Cell wall formation. In Rickettsia massiliae (strain Mtu5), this protein is UDP-N-acetylmuramate--L-alanine ligase.